Here is a 71-residue protein sequence, read N- to C-terminus: Pseudonajatoxin b (71 aa).

5 disulfides stabilise this stretch: C3-C21, C14-C42, C27-C31, C46-C58, and C59-C64.

Belongs to the three-finger toxin family. Long-chain subfamily. Type II alpha-neurotoxin sub-subfamily. In terms of tissue distribution, expressed by the venom gland.

It is found in the secreted. Functionally, binds with high affinity to muscular (alpha-1/CHRNA1) and neuronal (alpha-7/CHRNA7) nicotinic acetylcholine receptor (nAChR) and inhibits acetylcholine from binding to the receptor, thereby impairing neuromuscular and neuronal transmission. The sequence is that of Pseudonajatoxin b from Pseudonaja textilis (Eastern brown snake).